The chain runs to 215 residues: Thymidylate kinase (215 aa).

11–18 (GIDGAGKS) contributes to the ATP binding site.

It belongs to the thymidylate kinase family.

It carries out the reaction dTMP + ATP = dTDP + ADP. In terms of biological role, phosphorylation of dTMP to form dTDP in both de novo and salvage pathways of dTTP synthesis. The polypeptide is Thymidylate kinase (Nitrosomonas europaea (strain ATCC 19718 / CIP 103999 / KCTC 2705 / NBRC 14298)).